The chain runs to 328 residues: POU domain, class 5, transcription factor 2 (328 aa).

Residues 1 to 25 are disordered; that stretch reads MAGHRPSNHFCPLPGSGGGGPRGPM. Residues 118–192 enclose the POU-specific domain; the sequence is DISGILKELQ…LLKKWLKEVE (75 aa). The homeobox DNA-binding region spans 210–269; it reads GKWRRASRERRIGNSLEKFFQRCPKPTPQQISHIAGCLQLQKDVVRVWFYNRSKMGSRPT.

The protein belongs to the POU transcription factor family. Class-5 subfamily. As to expression, expressed in skeletal and cardiac muscles, brain, heart and lung. Little or no detectable expression found in pancreas, kidney, liver or placenta.

It localises to the nucleus. Transcription factor that binds preferentially to the octamer motif (5'-ATGTTAAT-3'). May exert a regulatory function in meiotic events that are required for terminal differentiation of male germ cell. The sequence is that of POU domain, class 5, transcription factor 2 (POU5F2) from Homo sapiens (Human).